The sequence spans 285 residues: Nucleotide-binding protein Pfl01_0854 (285 aa).

An ATP-binding site is contributed by 8-15; it reads GRSGSGKS. 60 to 63 contributes to the GTP binding site; sequence DARN.

It belongs to the RapZ-like family.

In terms of biological role, displays ATPase and GTPase activities. The polypeptide is Nucleotide-binding protein Pfl01_0854 (Pseudomonas fluorescens (strain Pf0-1)).